The sequence spans 1034 residues: Condensin complex subunit 3 (1034 aa).

7 HEAT repeats span residues S95 to E132, D139 to P176, C178 to K213, L242 to E279, D281 to N317, T439 to T476, and D618 to M655. The segment covering T663–A672 has biased composition (polar residues). The interval T663–L693 is disordered. 3 HEAT repeats span residues A703–L740, C785–R823, and E878–E915. Basic and acidic residues predominate over residues Q909–A949. Residues Q909–N1034 form a disordered region. Residues R964 to A984 are compositionally biased toward basic residues. Basic and acidic residues predominate over residues S985–E999.

It belongs to the CND3 (condensin subunit 3) family. Component of the condensin complex, which contains the XCAP-E/SMC2 and XCAP-C/SMC4 heterodimer, and three non SMC subunits that probably regulate the complex: XCAP-H/NCAPH, XCAP-D2/NCAPD2 and XCAP-G/NCAPG. Post-translationally, phosphorylated by cdk1. Its phosphorylation, as well as that of XCAP-D2 and XCAP-H subunits, activates the condensin complex and is required for chromosome condensation.

The protein resides in the nucleus. The protein localises to the cytoplasm. It localises to the chromosome. Functionally, regulatory subunit of the condensin complex, a complex required for conversion of interphase chromatin into mitotic-like condense chromosomes. The condensin complex probably introduces positive supercoils into relaxed DNA in the presence of type I topoisomerases and converts nicked DNA into positive knotted forms in the presence of type II topoisomerase. The sequence is that of Condensin complex subunit 3 (ncapg) from Xenopus laevis (African clawed frog).